Reading from the N-terminus, the 238-residue chain is Uridylate kinase (238 aa).

ATP is bound at residue 12-15 (KVSG). Gly54 lines the UMP pocket. Residues Gly55 and Arg59 each coordinate ATP. UMP-binding positions include Asp74 and 135–142 (TGNPYFTT). ATP-binding residues include Thr162, Asn163, Tyr168, and Asp171.

This sequence belongs to the UMP kinase family. As to quaternary structure, homohexamer.

The protein localises to the cytoplasm. The enzyme catalyses UMP + ATP = UDP + ADP. Its pathway is pyrimidine metabolism; CTP biosynthesis via de novo pathway; UDP from UMP (UMPK route): step 1/1. Inhibited by UTP. Functionally, catalyzes the reversible phosphorylation of UMP to UDP. This is Uridylate kinase from Azorhizobium caulinodans (strain ATCC 43989 / DSM 5975 / JCM 20966 / LMG 6465 / NBRC 14845 / NCIMB 13405 / ORS 571).